The sequence spans 430 residues: Serine--tRNA ligase (430 aa).

237 to 239 (TAE) is a binding site for L-serine. 268-270 (RRE) is a binding site for ATP. E291 lines the L-serine pocket. Position 355-358 (355-358 (EISS)) interacts with ATP. Residue S391 participates in L-serine binding.

Belongs to the class-II aminoacyl-tRNA synthetase family. Type-1 seryl-tRNA synthetase subfamily. Homodimer. The tRNA molecule binds across the dimer.

It localises to the cytoplasm. The catalysed reaction is tRNA(Ser) + L-serine + ATP = L-seryl-tRNA(Ser) + AMP + diphosphate + H(+). It carries out the reaction tRNA(Sec) + L-serine + ATP = L-seryl-tRNA(Sec) + AMP + diphosphate + H(+). The protein operates within aminoacyl-tRNA biosynthesis; selenocysteinyl-tRNA(Sec) biosynthesis; L-seryl-tRNA(Sec) from L-serine and tRNA(Sec): step 1/1. In terms of biological role, catalyzes the attachment of serine to tRNA(Ser). Is also able to aminoacylate tRNA(Sec) with serine, to form the misacylated tRNA L-seryl-tRNA(Sec), which will be further converted into selenocysteinyl-tRNA(Sec). This is Serine--tRNA ligase from Magnetococcus marinus (strain ATCC BAA-1437 / JCM 17883 / MC-1).